A 374-amino-acid polypeptide reads, in one-letter code: Peptide chain release factor 2 (374 aa).

The residue at position 249 (Gln249) is an N5-methylglutamine.

The protein belongs to the prokaryotic/mitochondrial release factor family. Methylated by PrmC. Methylation increases the termination efficiency of RF2.

The protein localises to the cytoplasm. Peptide chain release factor 2 directs the termination of translation in response to the peptide chain termination codons UGA and UAA. The polypeptide is Peptide chain release factor 2 (Ruegeria sp. (strain TM1040) (Silicibacter sp.)).